Here is a 245-residue protein sequence, read N- to C-terminus: Probable 2-phosphosulfolactate phosphatase (245 aa).

It belongs to the ComB family. Requires Mg(2+) as cofactor.

The catalysed reaction is (2R)-O-phospho-3-sulfolactate + H2O = (2R)-3-sulfolactate + phosphate. The chain is Probable 2-phosphosulfolactate phosphatase from Synechococcus sp. (strain RCC307).